We begin with the raw amino-acid sequence, 201 residues long: MAGAKIGIFGGSFNPVHLGHLVLAREAFWQAKLNQVIFIPAKIPPHKKEGVISEQHRFQMLRLALKKYPEFSVSNIEFLRDKPSYTFDTVEELKLLYPHDELYFITGADGLLEITGWYRGEELLKKIPIIAVSRAGVSKEVFLNQVQYLKNRYRAQIIVVEMPEIGISSSLIRQRIREKLPYSHLIPVEVYDYIVANNLYR.

The protein belongs to the NadD family.

It carries out the reaction nicotinate beta-D-ribonucleotide + ATP + H(+) = deamido-NAD(+) + diphosphate. It participates in cofactor biosynthesis; NAD(+) biosynthesis; deamido-NAD(+) from nicotinate D-ribonucleotide: step 1/1. In terms of biological role, catalyzes the reversible adenylation of nicotinate mononucleotide (NaMN) to nicotinic acid adenine dinucleotide (NaAD). This Carboxydothermus hydrogenoformans (strain ATCC BAA-161 / DSM 6008 / Z-2901) protein is Probable nicotinate-nucleotide adenylyltransferase.